Consider the following 335-residue polypeptide: Beta-ketoacyl-[acyl-carrier-protein] synthase III (335 aa).

Active-site residues include Cys-116 and His-256. An ACP-binding region spans residues 257-261 (QANLR). Asn-286 is an active-site residue.

This sequence belongs to the thiolase-like superfamily. FabH family. As to quaternary structure, homodimer.

The protein resides in the cytoplasm. The catalysed reaction is malonyl-[ACP] + acetyl-CoA + H(+) = 3-oxobutanoyl-[ACP] + CO2 + CoA. It functions in the pathway lipid metabolism; fatty acid biosynthesis. Its function is as follows. Catalyzes the condensation reaction of fatty acid synthesis by the addition to an acyl acceptor of two carbons from malonyl-ACP. Catalyzes the first condensation reaction which initiates fatty acid synthesis and may therefore play a role in governing the total rate of fatty acid production. Possesses both acetoacetyl-ACP synthase and acetyl transacylase activities. Its substrate specificity determines the biosynthesis of branched-chain and/or straight-chain of fatty acids. This is Beta-ketoacyl-[acyl-carrier-protein] synthase III from Porphyromonas gingivalis (strain ATCC 33277 / DSM 20709 / CIP 103683 / JCM 12257 / NCTC 11834 / 2561).